Consider the following 130-residue polypeptide: Large ribosomal subunit protein bL20c (130 aa).

The protein belongs to the bacterial ribosomal protein bL20 family.

Its subcellular location is the plastid. It is found in the chloroplast. Binds directly to 23S ribosomal RNA and is necessary for the in vitro assembly process of the 50S ribosomal subunit. It is not involved in the protein synthesizing functions of that subunit. This chain is Large ribosomal subunit protein bL20c, found in Fagopyrum esculentum subsp. ancestrale (Wild buckwheat).